Consider the following 154-residue polypeptide: 6,7-dimethyl-8-ribityllumazine synthase (154 aa).

5-amino-6-(D-ribitylamino)uracil contacts are provided by residues Phe22, 56–58, and 80–82; these read AFE and TVI. 85 to 86 is a (2S)-2-hydroxy-3-oxobutyl phosphate binding site; it reads AT. The active-site Proton donor is His88. Phe113 is a 5-amino-6-(D-ribitylamino)uracil binding site. Arg127 is a (2S)-2-hydroxy-3-oxobutyl phosphate binding site.

It belongs to the DMRL synthase family. Forms an icosahedral capsid composed of 60 subunits, arranged as a dodecamer of pentamers.

The catalysed reaction is (2S)-2-hydroxy-3-oxobutyl phosphate + 5-amino-6-(D-ribitylamino)uracil = 6,7-dimethyl-8-(1-D-ribityl)lumazine + phosphate + 2 H2O + H(+). It participates in cofactor biosynthesis; riboflavin biosynthesis; riboflavin from 2-hydroxy-3-oxobutyl phosphate and 5-amino-6-(D-ribitylamino)uracil: step 1/2. Its function is as follows. Catalyzes the formation of 6,7-dimethyl-8-ribityllumazine by condensation of 5-amino-6-(D-ribitylamino)uracil with 3,4-dihydroxy-2-butanone 4-phosphate. This is the penultimate step in the biosynthesis of riboflavin. This is 6,7-dimethyl-8-ribityllumazine synthase from Bacillus licheniformis (strain ATCC 14580 / DSM 13 / JCM 2505 / CCUG 7422 / NBRC 12200 / NCIMB 9375 / NCTC 10341 / NRRL NRS-1264 / Gibson 46).